The sequence spans 372 residues: Queuine tRNA-ribosyltransferase (372 aa).

Catalysis depends on Asp-92, which acts as the Proton acceptor. Residues 92-96, Asp-146, Gln-188, and Gly-215 contribute to the substrate site; that span reads DSGGY. Residues 246–252 are RNA binding; that stretch reads GIGSLRE. Asp-265 (nucleophile) is an active-site residue. Positions 270-274 are RNA binding; important for wobble base 34 recognition; it reads TRLGR. Residues Cys-303, Cys-305, Cys-308, and His-334 each coordinate Zn(2+).

It belongs to the queuine tRNA-ribosyltransferase family. In terms of assembly, homodimer. Within each dimer, one monomer is responsible for RNA recognition and catalysis, while the other monomer binds to the replacement base PreQ1. The cofactor is Zn(2+).

It catalyses the reaction 7-aminomethyl-7-carbaguanine + guanosine(34) in tRNA = 7-aminomethyl-7-carbaguanosine(34) in tRNA + guanine. Its pathway is tRNA modification; tRNA-queuosine biosynthesis. Functionally, catalyzes the base-exchange of a guanine (G) residue with the queuine precursor 7-aminomethyl-7-deazaguanine (PreQ1) at position 34 (anticodon wobble position) in tRNAs with GU(N) anticodons (tRNA-Asp, -Asn, -His and -Tyr). Catalysis occurs through a double-displacement mechanism. The nucleophile active site attacks the C1' of nucleotide 34 to detach the guanine base from the RNA, forming a covalent enzyme-RNA intermediate. The proton acceptor active site deprotonates the incoming PreQ1, allowing a nucleophilic attack on the C1' of the ribose to form the product. After dissociation, two additional enzymatic reactions on the tRNA convert PreQ1 to queuine (Q), resulting in the hypermodified nucleoside queuosine (7-(((4,5-cis-dihydroxy-2-cyclopenten-1-yl)amino)methyl)-7-deazaguanosine). This Prochlorococcus marinus subsp. pastoris (strain CCMP1986 / NIES-2087 / MED4) protein is Queuine tRNA-ribosyltransferase.